Reading from the N-terminus, the 1849-residue chain is NADH-ubiquinone oxidoreductase chain 5 (1849 aa).

41 consecutive transmembrane segments (helical) span residues 76–93, 98–120, 190–212, 222–244, 279–301, 316–338, 358–380, 390–412, 419–441, 483–505, 510–532, 536–558, 565–587, 621–640, 683–705, 718–740, 745–767, 797–819, 868–890, 905–927, 966–988, 1008–1030, 1073–1095, 1105–1127, 1172–1194, 1219–1241, 1248–1270, 1296–1318, 1330–1352, 1357–1379, 1418–1440, 1444–1466, 1478–1500, 1504–1526, 1533–1555, 1559–1581, 1602–1624, 1639–1661, 1719–1741, 1773–1795, and 1802–1824; these read YLLL…TVCY, LILL…YLQY, YWLC…IIGW, LVPT…IYLY, HLLT…ILSS, LALQ…ILCY, LEII…ILSV, VIIL…TILI, IAVY…IWLL, LLDA…CLGV, LFIA…LQVV, ISYI…VYSI, LIMY…IHTI, IWLI…STLV, WVRF…YVQF, LTRI…QGIL, IISY…LTIL, PTWV…LVTV, ILLL…LLSL, LTVQ…YIVL, LYSY…SLLE, PDLL…ELLL, LTVV…QILF, LATI…LSYL, TYLL…IYII, VYFL…FFYH, GIFY…TLYY, IITF…AIIL, FAYN…IVSY, MIIF…YARI, LFAL…FDFT, VIVF…FVWL, ALIH…APIL, VYTL…ILAT, KAVA…FLAF, LIYL…YIVH, IAIY…GFFA, VATF…LYRI, LLHL…LVTG, VRNI…TAIN, and IIYL…HYFL.

The protein belongs to the complex I subunit 5 family.

It localises to the hydrogenosome membrane. The catalysed reaction is a ubiquinone + NADH + 5 H(+)(in) = a ubiquinol + NAD(+) + 4 H(+)(out). The sequence is that of NADH-ubiquinone oxidoreductase chain 5 (nad5) from Nyctotherus ovalis.